Reading from the N-terminus, the 438-residue chain is 3-phosphoshikimate 1-carboxyvinyltransferase (438 aa).

3 residues coordinate 3-phosphoshikimate: Lys21, Ser22, and Arg26. Lys21 is a phosphoenolpyruvate binding site. Positions 95 and 123 each coordinate phosphoenolpyruvate. 3-phosphoshikimate-binding residues include Ser167, Gln169, Asp315, and Lys342. Phosphoenolpyruvate is bound at residue Gln169. Residue Asp315 is the Proton acceptor of the active site. 2 residues coordinate phosphoenolpyruvate: Arg346 and Arg387.

This sequence belongs to the EPSP synthase family. In terms of assembly, monomer.

The protein resides in the cytoplasm. It catalyses the reaction 3-phosphoshikimate + phosphoenolpyruvate = 5-O-(1-carboxyvinyl)-3-phosphoshikimate + phosphate. Its pathway is metabolic intermediate biosynthesis; chorismate biosynthesis; chorismate from D-erythrose 4-phosphate and phosphoenolpyruvate: step 6/7. Its function is as follows. Catalyzes the transfer of the enolpyruvyl moiety of phosphoenolpyruvate (PEP) to the 5-hydroxyl of shikimate-3-phosphate (S3P) to produce enolpyruvyl shikimate-3-phosphate and inorganic phosphate. The polypeptide is 3-phosphoshikimate 1-carboxyvinyltransferase (Coxiella burnetii (strain RSA 331 / Henzerling II)).